A 158-amino-acid chain; its full sequence is 2-C-methyl-D-erythritol 2,4-cyclodiphosphate synthase (158 aa).

Residues D9 and H11 each coordinate a divalent metal cation. 4-CDP-2-C-methyl-D-erythritol 2-phosphate contacts are provided by residues 9-11 (DVH) and 35-36 (HS). Position 43 (H43) interacts with a divalent metal cation. Residues 57–59 (DIG), 62–66 (FPDTD), 101–107 (AQKPKMA), 133–136 (TTTE), F140, and R143 contribute to the 4-CDP-2-C-methyl-D-erythritol 2-phosphate site.

It belongs to the IspF family. Homotrimer. It depends on a divalent metal cation as a cofactor.

It catalyses the reaction 4-CDP-2-C-methyl-D-erythritol 2-phosphate = 2-C-methyl-D-erythritol 2,4-cyclic diphosphate + CMP. The protein operates within isoprenoid biosynthesis; isopentenyl diphosphate biosynthesis via DXP pathway; isopentenyl diphosphate from 1-deoxy-D-xylulose 5-phosphate: step 4/6. Functionally, involved in the biosynthesis of isopentenyl diphosphate (IPP) and dimethylallyl diphosphate (DMAPP), two major building blocks of isoprenoid compounds. Catalyzes the conversion of 4-diphosphocytidyl-2-C-methyl-D-erythritol 2-phosphate (CDP-ME2P) to 2-C-methyl-D-erythritol 2,4-cyclodiphosphate (ME-CPP) with a corresponding release of cytidine 5-monophosphate (CMP). The polypeptide is 2-C-methyl-D-erythritol 2,4-cyclodiphosphate synthase (Bacillus thuringiensis subsp. konkukian (strain 97-27)).